A 293-amino-acid chain; its full sequence is Acetylglutamate kinase (293 aa).

Substrate-binding positions include 65–66 (GG), arginine 87, and asparagine 180.

Belongs to the acetylglutamate kinase family. ArgB subfamily.

It localises to the cytoplasm. The catalysed reaction is N-acetyl-L-glutamate + ATP = N-acetyl-L-glutamyl 5-phosphate + ADP. Its pathway is amino-acid biosynthesis; L-arginine biosynthesis; N(2)-acetyl-L-ornithine from L-glutamate: step 2/4. Catalyzes the ATP-dependent phosphorylation of N-acetyl-L-glutamate. The polypeptide is Acetylglutamate kinase (Cereibacter sphaeroides (strain ATCC 17029 / ATH 2.4.9) (Rhodobacter sphaeroides)).